The sequence spans 234 residues: 1-(5-phosphoribosyl)-5-[(5-phosphoribosylamino)methylideneamino] imidazole-4-carboxamide isomerase (234 aa).

Catalysis depends on aspartate 9, which acts as the Proton acceptor. Residue aspartate 131 is the Proton donor of the active site.

It belongs to the HisA/HisF family.

It localises to the cytoplasm. The enzyme catalyses 1-(5-phospho-beta-D-ribosyl)-5-[(5-phospho-beta-D-ribosylamino)methylideneamino]imidazole-4-carboxamide = 5-[(5-phospho-1-deoxy-D-ribulos-1-ylimino)methylamino]-1-(5-phospho-beta-D-ribosyl)imidazole-4-carboxamide. Its pathway is amino-acid biosynthesis; L-histidine biosynthesis; L-histidine from 5-phospho-alpha-D-ribose 1-diphosphate: step 4/9. The protein is 1-(5-phosphoribosyl)-5-[(5-phosphoribosylamino)methylideneamino] imidazole-4-carboxamide isomerase of Staphylococcus aureus (strain bovine RF122 / ET3-1).